Consider the following 164-residue polypeptide: Transcription elongation factor GreA (164 aa).

It belongs to the GreA/GreB family.

Necessary for efficient RNA polymerase transcription elongation past template-encoded arresting sites. The arresting sites in DNA have the property of trapping a certain fraction of elongating RNA polymerases that pass through, resulting in locked ternary complexes. Cleavage of the nascent transcript by cleavage factors such as GreA or GreB allows the resumption of elongation from the new 3'terminus. GreA releases sequences of 2 to 3 nucleotides. The polypeptide is Transcription elongation factor GreA (Helicobacter pylori (strain J99 / ATCC 700824) (Campylobacter pylori J99)).